The following is a 280-amino-acid chain: MSQEIRQNEKISYRIEGPFFIIHLMNPDNLNALEGEDYIYLGELLELADRNRDVYFTIIQSSGRFFSSGADFKGIAKAQGDDTNKYPSETSKWVSNFVARNVYVTDAFIKHSKVLICCLNGPAIGLSAALVALCDIVYSINDKVYLLYPFANLGLITEGGTTVSLPLKFGTNTTYECLMFNKPFKYDIMCENGFISKNFNMPSSNAEAFNAKVLEELREKVKGLYLPSCLGMKKLLKSNHIDAFNKANSVEVNESLKYWVDGEPLKRFRQLGSKQRKHRL.

Substrate contacts are provided by residues 68–72 and Leu-126; that span reads SGADF. Catalysis depends on Glu-158, which acts as the Proton donor/acceptor. Residues 278-280 carry the Microbody targeting signal motif; it reads HRL.

This sequence belongs to the enoyl-CoA hydratase/isomerase family. In terms of assembly, homohexamer, dimer of trimers. Interacts with DCI1.

The protein localises to the peroxisome. It carries out the reaction a (3Z)-enoyl-CoA = a 4-saturated (2E)-enoyl-CoA. The catalysed reaction is a (3E)-enoyl-CoA = a 4-saturated (2E)-enoyl-CoA. Its pathway is lipid metabolism; fatty acid beta-oxidation. Its function is as follows. Essential for the beta oxidation of unsaturated fatty acids. In Saccharomyces cerevisiae (strain ATCC 204508 / S288c) (Baker's yeast), this protein is 3,2-trans-enoyl-CoA isomerase (ECI1).